Consider the following 478-residue polypeptide: Abscisate beta-glucosyltransferase (478 aa).

His20 functions as the Proton acceptor in the catalytic mechanism. Residue His20 participates in an anthocyanidin binding. Asp108 acts as the Charge relay in catalysis. The UDP-alpha-D-glucose site is built by Ala340, Gln342, His357, Trp360, Asn361, Ser362, and Glu365. Ala380 lines the an anthocyanidin pocket. The UDP-alpha-D-glucose site is built by Glu381 and Gln382.

The protein belongs to the UDP-glycosyltransferase family.

It carries out the reaction 2-cis-(+)-abscisate + UDP-alpha-D-glucose = beta-D-glucopyranosyl cis-(+)-abscisate + UDP. Its function is as follows. Glucosyltransferase involved in the catabolism of abscisic acid (ABA). Adds a glucosyl group at the C-1 position of ABA; (S)-2-trans-abscisate is a better substrate than the natural (+)-S-abscisate or its enantiomer (-)-R-abscisate. No activity with (-)-phaseic acid (PA), methylated-ABA or with other hormones such as jasmonate, zeatin, auxin (IAA) or gibberellin A3 (GA3). This chain is Abscisate beta-glucosyltransferase (AOG), found in Phaseolus angularis (Azuki bean).